The primary structure comprises 157 residues: SsrA-binding protein (157 aa).

A compositionally biased stretch (basic and acidic residues) spans 138 to 151; it reads ATEAKRDWGREKQR. A disordered region spans residues 138 to 157; the sequence is ATEAKRDWGREKQRLLKQHS.

It belongs to the SmpB family.

The protein resides in the cytoplasm. Its function is as follows. Required for rescue of stalled ribosomes mediated by trans-translation. Binds to transfer-messenger RNA (tmRNA), required for stable association of tmRNA with ribosomes. tmRNA and SmpB together mimic tRNA shape, replacing the anticodon stem-loop with SmpB. tmRNA is encoded by the ssrA gene; the 2 termini fold to resemble tRNA(Ala) and it encodes a 'tag peptide', a short internal open reading frame. During trans-translation Ala-aminoacylated tmRNA acts like a tRNA, entering the A-site of stalled ribosomes, displacing the stalled mRNA. The ribosome then switches to translate the ORF on the tmRNA; the nascent peptide is terminated with the 'tag peptide' encoded by the tmRNA and targeted for degradation. The ribosome is freed to recommence translation, which seems to be the essential function of trans-translation. In Cereibacter sphaeroides (strain ATCC 17025 / ATH 2.4.3) (Rhodobacter sphaeroides), this protein is SsrA-binding protein.